We begin with the raw amino-acid sequence, 456 residues long: Enolase (456 aa).

Gln164 is a (2R)-2-phosphoglycerate binding site. Glu207 serves as the catalytic Proton donor. The Mg(2+) site is built by Asp244, Glu287, and Asp314. Residues Lys339, Arg368, Ser369, and Lys390 each contribute to the (2R)-2-phosphoglycerate site. Catalysis depends on Lys339, which acts as the Proton acceptor.

The protein belongs to the enolase family. As to quaternary structure, component of the RNA degradosome, a multiprotein complex involved in RNA processing and mRNA degradation. Mg(2+) is required as a cofactor.

It is found in the cytoplasm. Its subcellular location is the secreted. It localises to the cell surface. It carries out the reaction (2R)-2-phosphoglycerate = phosphoenolpyruvate + H2O. It functions in the pathway carbohydrate degradation; glycolysis; pyruvate from D-glyceraldehyde 3-phosphate: step 4/5. In terms of biological role, catalyzes the reversible conversion of 2-phosphoglycerate (2-PG) into phosphoenolpyruvate (PEP). It is essential for the degradation of carbohydrates via glycolysis. This chain is Enolase, found in Francisella tularensis subsp. novicida (strain U112).